A 250-amino-acid chain; its full sequence is Small ribosomal subunit protein uS2 (250 aa).

Belongs to the universal ribosomal protein uS2 family.

The chain is Small ribosomal subunit protein uS2 from Delftia acidovorans (strain DSM 14801 / SPH-1).